The chain runs to 710 residues: Nucleolin (710 aa).

The tract at residues 1–303 (MVKLAKAGKN…KKQKVEGTEP (303 aa)) is disordered. N6-acetyllysine is present on residues lysine 9, lysine 15, and lysine 16. Over residues 24–43 (VEEDSEDEEMSEDEEDDSSG) the composition is skewed to acidic residues. A phosphoserine mark is found at serine 28, serine 34, serine 41, and serine 42. Low complexity predominate over residues 56–107 (AAATSAKKVVVSPTKKVAVATPAKKAAVTPGKKAAATPAKKTVTPAKAVTTP). The stretch at 58–65 (ATSAKKVV) is repeat 1. An 8 X 8 AA tandem repeats of X-T-P-X-K-K-X-X region spans residues 58–135 (ATSAKKVVVS…GAAIPAKGAK (78 aa)). Phosphoserine is present on serine 67. 4 positions are modified to phosphothreonine: threonine 69, threonine 76, threonine 84, and threonine 92. 3 consecutive repeat copies span residues 75–82 (ATPAKKAA), 83–90 (VTPGKKAA), and 91–98 (ATPAKKTV). Lysine 96 carries the N6-acetyllysine modification. Position 99 is a phosphothreonine (threonine 99). A 5; truncated repeat occupies 99-104 (TPAKAV). Lysine 102 carries the N6-acetyllysine modification. The stretch at 105–112 (TTPGKKGA) is repeat 6. At threonine 106 the chain carries Phosphothreonine. Lysine 109 is subject to N6-acetyllysine. Threonine 113 bears the Phosphothreonine mark. Lysine 116 is subject to N6-acetyllysine. Repeat copies occupy residues 120 to 127 (ATPGKKGA) and 128 to 135 (AIPAKGAK). Residue threonine 121 is modified to Phosphothreonine. Low complexity predominate over residues 122 to 137 (PGKKGAAIPAKGAKNG). Lysine 124 is subject to N6-acetyllysine. Serine 145 and serine 153 each carry phosphoserine. Acidic residues predominate over residues 145 to 171 (SDEEEDDDSEEDEEDDEDEDEDEDEIE). The span at 172–183 (PAAMKAAAAAPA) shows a compositional bias: low complexity. A phosphoserine mark is found at serine 184 and serine 206. Residues 184 to 211 (SEDEDDEDDEDDEDDDDDEEDDSEEEAM) show a composition bias toward acidic residues. The residue at position 214 (threonine 214) is a Phosphothreonine. A compositionally biased stretch (acidic residues) spans 234-272 (EDEDEEEDDEDEDDDDDEDDEDDDDEDDEEEEEEEEEEP). Residues 273 to 300 (VKEAPGKRKKEMAKQKAAPEAKKQKVEG) are compositionally biased toward basic and acidic residues. A Glycyl lysine isopeptide (Lys-Gly) (interchain with G-Cter in SUMO1); alternate cross-link involves residue lysine 297. A Glycyl lysine isopeptide (Lys-Gly) (interchain with G-Cter in SUMO2); alternate cross-link involves residue lysine 297. Threonine 301 carries the post-translational modification Phosphothreonine. RRM domains follow at residues 307–383 (FNLF…KPKG) and 393–466 (RTLL…YTGE). Lysine 318 bears the N6-acetyllysine mark. A Glycyl lysine isopeptide (Lys-Gly) (interchain with G-Cter in SUMO1); alternate cross-link involves residue lysine 324. Lysine 324 participates in a covalent cross-link: Glycyl lysine isopeptide (Lys-Gly) (interchain with G-Cter in SUMO2); alternate. An N6-acetyllysine modification is found at lysine 348. The residue at position 356 (serine 356) is a Phosphoserine. At threonine 367 the chain carries Phosphothreonine. Lysine 370 is covalently cross-linked (Glycyl lysine isopeptide (Lys-Gly) (interchain with G-Cter in SUMO2)). Lysine 377 is covalently cross-linked (Glycyl lysine isopeptide (Lys-Gly) (interchain with G-Cter in SUMO2); alternate). Lysine 377 carries the post-translational modification N6-acetyllysine; alternate. Lysine 398 and lysine 403 each carry N6-acetyllysine. Threonine 405 carries the post-translational modification Phosphothreonine. 2 positions are modified to N6-acetyllysine: lysine 427 and lysine 444. Phosphoserine occurs at positions 458 and 460. Residues lysine 467 and lysine 477 each carry the N6-acetyllysine modification. An RRM 3 domain is found at 486–560 (KTLVLSNLSY…RAIRLELQGP (75 aa)). Lysine 513 participates in a covalent cross-link: Glycyl lysine isopeptide (Lys-Gly) (interchain with G-Cter in SUMO2); alternate. Lysine 513 is subject to N6-acetyllysine; alternate. Lysine 521 bears the N6-acetyllysine mark. Serine 563 is modified (phosphoserine). Lysine 572 is subject to N6-acetyllysine. Positions 572–647 (KTLFVKGLSE…NKVTLDWAKP (76 aa)) constitute an RRM 4 domain. Lysine 577 is covalently cross-linked (Glycyl lysine isopeptide (Lys-Gly) (interchain with G-Cter in SUMO2); alternate). Lysine 577 carries the N6-acetyllysine; alternate modification. Serine 580 carries the post-translational modification Phosphoserine. A Glycyl lysine isopeptide (Lys-Gly) (interchain with G-Cter in SUMO1); alternate cross-link involves residue lysine 589. A Glycyl lysine isopeptide (Lys-Gly) (interchain with G-Cter in SUMO2); alternate cross-link involves residue lysine 589. A phosphoserine mark is found at serine 591 and serine 619. Residue lysine 624 forms a Glycyl lysine isopeptide (Lys-Gly) (interchain with G-Cter in SUMO2) linkage. The interval 640–710 (VTLDWAKPKG…KPQGKKTKFE (71 aa)) is disordered. Lysine 646 carries the post-translational modification N6-acetyllysine. Positions 650–696 (EGGFGGRGGGRGGFGGRGGGRGGRGGFGGRGRGGFGGRGGFRGGRGG) are enriched in gly residues. Asymmetric dimethylarginine is present on residues arginine 656, arginine 660, arginine 666, arginine 670, arginine 673, arginine 679, arginine 681, arginine 687, and arginine 691. Position 694 is an asymmetric dimethylarginine; alternate (arginine 694). Arginine 694 carries the omega-N-methylarginine; alternate modification. A compositionally biased stretch (basic and acidic residues) spans 697–710 (GGDHKPQGKKTKFE).

As to quaternary structure, identified in a IGF2BP1-dependent mRNP granule complex containing untranslated mRNAs. Component of the SWAP complex that consists of NPM1, NCL/nucleolin, PARP1 and SWAP70. Component of a complex which is at least composed of HTATSF1/Tat-SF1, the P-TEFb complex components CDK9 and CCNT1, RNA polymerase II, SUPT5H, and NCL/nucleolin. Interacts with AICDA. Interacts with APTX. Interacts with C1QBP. Interacts with ERBB4. Interacts (via C-terminus) with FMR1 isoform 6 (via N-terminus). Interacts with GZF1; this interaction is important for nucleolar localization of GZF1. Interacts with NSUN2. Interacts with NVL. Interacts (via N-terminus domain) with SETX. Interacts (via RRM1 and C-terminal RRM4/Arg/Gly-rich domains) with TERT; the interaction is important for nucleolar localization of TERT. Interacts with WDR46. Interacts with ZFP36. Interacts with LRRC34. Interacts with RRP1B. Interacts with HNRNPU; this interaction occurs during mitosis. Interacts with RIOK1; RIOK1 recruits NCL to PRMT5 for symmetrically methylation. Interacts with ZBTB7B. Interacts with MDK; this interaction promotes NCL clustering and lateral movements of this complex into lipid rafts leading to MDK internalization. Interacts with HDGF (isoform 1). Interacts with ALKBH2. Interacts with IGFBP5; this interaction is necessary for IGFBP5 localization to the nucleus. Interacts with DDX24 (when ubiquitinated); this interaction may be important during ribosome biogenesis. Some glutamate residues are glycylated by TTLL8. This modification occurs exclusively on glutamate residues and results in a glycine chain on the gamma-carboxyl group. Post-translationally, symmetrically methylated by PRMT5.

Its subcellular location is the nucleus. It is found in the nucleolus. It localises to the cytoplasm. Nucleolin is the major nucleolar protein of growing eukaryotic cells. It is found associated with intranucleolar chromatin and pre-ribosomal particles. It induces chromatin decondensation by binding to histone H1. It is thought to play a role in pre-rRNA transcription and ribosome assembly. May play a role in the process of transcriptional elongation. Binds RNA oligonucleotides with 5'-UUAGGG-3' repeats more tightly than the telomeric single-stranded DNA 5'-TTAGGG-3' repeats. In Homo sapiens (Human), this protein is Nucleolin (NCL).